Reading from the N-terminus, the 392-residue chain is L-rhamnonate dehydratase (392 aa).

Residues His22 and Arg48 each coordinate substrate. Residues Asp214, Glu240, and Glu268 each coordinate Mg(2+). The active-site Proton acceptor is the His318. Glu338 contributes to the substrate binding site.

The protein belongs to the mandelate racemase/muconate lactonizing enzyme family. RhamD subfamily. In terms of assembly, homooctamer; tetramer of dimers. Mg(2+) serves as cofactor.

The catalysed reaction is L-rhamnonate = 2-dehydro-3-deoxy-L-rhamnonate + H2O. Its function is as follows. Catalyzes the dehydration of L-rhamnonate to 2-keto-3-deoxy-L-rhamnonate (KDR). The sequence is that of L-rhamnonate dehydratase from Burkholderia ambifaria (strain MC40-6).